Here is a 311-residue protein sequence, read N- to C-terminus: MEPLREIRNRLLNGWQLSKMHTFEVAARHQSFALAAEELSLSPSAVSHRINQLEEELGIQLFVRSHRKVELTHEGKRVYWALKSSLDTLNQEILDIKNQELSGTLTLYSRPSIAQCWLVPALGDFTRRYPSISLTVLTGNDNVNLQRAGIDLAIYFDDAPSAQLTHHFLMDEEILPVCSPEYAQRHALTNTVINLCHCTLLHDRQAWSNDSGTDEWHSWAQHYAVNLPTSSGIGFDRSDLAVIAAMNHIGVAMGRKRLVQKRLASGELVAPFGDMTVKCHQHYYITTLPGRQWPKIEAFIIWLREQVKTTS.

The region spanning 15-72 is the HTH lysR-type domain; the sequence is WQLSKMHTFEVAARHQSFALAAEELSLSPSAVSHRINQLEEELGIQLFVRSHRKVELT. The H-T-H motif DNA-binding region spans 32–51; that stretch reads FALAAEELSLSPSAVSHRIN.

The protein belongs to the LysR transcriptional regulatory family.

Its function is as follows. Regulates the expression of the dsdX-dsdA operon. The polypeptide is HTH-type transcriptional regulator DsdC (Escherichia coli (strain K12)).